We begin with the raw amino-acid sequence, 578 residues long: GPI-anchor transamidase component PIGT (578 aa).

An N-terminal signal peptide occupies residues 1-21 (MAAAMPLALLVLLLLGPGGWC). Over 22-525 (LAEPPRDSLR…NLPTPDFSMP (504 aa)) the chain is Lumenal. The N-linked (GlcNAc...) asparagine glycan is linked to Asn-164. 2 cysteine pairs are disulfide-bonded: Cys-195–Cys-272 and Cys-226–Cys-231. N-linked (GlcNAc...) asparagine glycosylation is found at Asn-291 and Asn-327. Residues Asn-461, Asp-521, Ser-523, and Asn-527 each coordinate a 2-acyl-6-[6-phosphoethanolamine-alpha-D-mannosyl-(1-&gt;2)-6-phosphoethanolamine-alpha-D-mannosyl-(1-&gt;6)-2-phosphoethanolamine-alpha-D-mannosyl-(1-&gt;4)-alpha-D-glucosaminyl]-1-(1-radyl,2-acyl-sn-glycero-3-phospho)-1D-myo-inositol. Residues 526-548 (YNVICLTCTVVAVCYGSFYNLLT) traverse the membrane as a helical segment. Residues 549–578 (RTFHIEEPRTGGLAKRLANLIRRARGVPPL) are Cytoplasmic-facing.

The protein belongs to the PIGT family. Heteropentamer. Part of the GPI-anchor transamidase complex, consisting of PIGK, PIGT, PIGS, PIGU and GAA1. Post-translationally, the disulfide bond between PIGK/GPI8 and PIGT is important for normal enzyme activity.

The protein localises to the endoplasmic reticulum membrane. It functions in the pathway glycolipid biosynthesis; glycosylphosphatidylinositol-anchor biosynthesis. Its function is as follows. Component of the glycosylphosphatidylinositol-anchor (GPI-anchor) transamidase (GPI-T) complex that catalyzes the formation of the linkage between a proprotein and a GPI-anchor and participates in GPI anchored protein biosynthesis. May play a crucial role in GPI-T complex assembly in the luminal layer. Binds GPI-anchor. This is GPI-anchor transamidase component PIGT from Homo sapiens (Human).